Consider the following 196-residue polypeptide: Holliday junction branch migration complex subunit RuvA (196 aa).

A domain I region spans residues 1–63; it reads MINKICGKIV…EDEIRLFGFL (63 aa). The segment at 64–135 is domain II; the sequence is NVSEREVFEK…KLRGKLVKVN (72 aa). The interval 135–138 is flexible linker; sequence NEAS. Positions 139–196 are domain III; sequence SGVLKFKELEQSIVNMGFDRKLVAAAIKEIMLIDEFLMLRQVDQEQFLFREILRKLSG.

It belongs to the RuvA family. As to quaternary structure, homotetramer. Forms an RuvA(8)-RuvB(12)-Holliday junction (HJ) complex. HJ DNA is sandwiched between 2 RuvA tetramers; dsDNA enters through RuvA and exits via RuvB. An RuvB hexamer assembles on each DNA strand where it exits the tetramer. Each RuvB hexamer is contacted by two RuvA subunits (via domain III) on 2 adjacent RuvB subunits; this complex drives branch migration. In the full resolvosome a probable DNA-RuvA(4)-RuvB(12)-RuvC(2) complex forms which resolves the HJ.

It is found in the cytoplasm. The RuvA-RuvB-RuvC complex processes Holliday junction (HJ) DNA during genetic recombination and DNA repair, while the RuvA-RuvB complex plays an important role in the rescue of blocked DNA replication forks via replication fork reversal (RFR). RuvA specifically binds to HJ cruciform DNA, conferring on it an open structure. The RuvB hexamer acts as an ATP-dependent pump, pulling dsDNA into and through the RuvAB complex. HJ branch migration allows RuvC to scan DNA until it finds its consensus sequence, where it cleaves and resolves the cruciform DNA. This chain is Holliday junction branch migration complex subunit RuvA, found in Borrelia turicatae (strain 91E135).